A 53-amino-acid polypeptide reads, in one-letter code: UPF0391 membrane protein Bxeno_A2958 (53 aa).

2 helical membrane-spanning segments follow: residues 5-25 and 30-50; these read AIVFFVIAIIAAVFGFTGIAA and IAKILFYIFLVVFVVTLLLGV.

This sequence belongs to the UPF0391 family.

The protein resides in the cell membrane. The sequence is that of UPF0391 membrane protein Bxeno_A2958 from Paraburkholderia xenovorans (strain LB400).